Here is a 135-residue protein sequence, read N- to C-terminus: Probable histone H2A.8 (135 aa).

Belongs to the histone H2A family. The nucleosome is a histone octamer containing two molecules each of H2A, H2B, H3 and H4 assembled in one H3-H4 heterotetramer and two H2A-H2B heterodimers. The octamer wraps approximately 147 bp of DNA.

It is found in the nucleus. It localises to the chromosome. Its function is as follows. Core component of nucleosome. Nucleosomes wrap and compact DNA into chromatin, limiting DNA accessibility to the cellular machineries which require DNA as a template. Histones thereby play a central role in transcription regulation, DNA repair, DNA replication and chromosomal stability. DNA accessibility is regulated via a complex set of post-translational modifications of histones, also called histone code, and nucleosome remodeling. The chain is Probable histone H2A.8 from Oryza sativa subsp. indica (Rice).